The following is a 695-amino-acid chain: Lactotransferrin (695 aa).

The first 6 residues, 1–6 (LGLCLA), serve as a signal peptide directing secretion. Transferrin-like domains lie at 12–339 (VRWC…NLRE) and 351–680 (VVWC…NLRR). 2 disulfides stabilise this stretch: cysteine 15/cysteine 51 and cysteine 25/cysteine 42. A Fe(3+)-binding site is contributed by aspartate 66. Lysine 79 is an active-site residue. Tyrosine 98 provides a ligand contact to Fe(3+). 5 disulfides stabilise this stretch: cysteine 121–cysteine 204, cysteine 163–cysteine 179, cysteine 166–cysteine 189, cysteine 176–cysteine 187, and cysteine 237–cysteine 251. Positions 123, 127, 129, and 130 each coordinate hydrogencarbonate. Asparagine 143 carries an N-linked (GlcNAc...) asparagine glycan. Residue tyrosine 198 participates in Fe(3+) binding. Residue histidine 259 coordinates Fe(3+). Serine 265 functions as the Nucleophile in the catalytic mechanism. Residue asparagine 287 is glycosylated (N-linked (GlcNAc...) asparagine). 2 disulfides stabilise this stretch: cysteine 354–cysteine 386 and cysteine 364–cysteine 377. Aspartate 401 provides a ligand contact to Fe(3+). 8 cysteine pairs are disulfide-bonded: cysteine 411/cysteine 690, cysteine 431/cysteine 653, cysteine 463/cysteine 538, cysteine 487/cysteine 681, cysteine 497/cysteine 511, cysteine 508/cysteine 521, cysteine 579/cysteine 593, and cysteine 631/cysteine 636. Position 436 (proline 436) interacts with D-glucose. Tyrosine 439 lines the Fe(3+) pocket. Threonine 465, arginine 469, alanine 471, and alanine 472 together coordinate hydrogencarbonate. N-linked (GlcNAc...) asparagine glycosylation is present at asparagine 482. Tyrosine 532 lines the Fe(3+) pocket. Asparagine 600 contributes to the D-glucose binding site. Histidine 601 lines the Fe(3+) pocket. Tyrosine 666 serves as a coordination point for D-glucose.

Belongs to the transferrin family. Monomer. Found in a complex with LTF, CLU, EPPIN and SEMG1. Found in a complex with MPO and LTF; interacts directly with CP, allows Fe(3+) incorporation into LTF and activation of CP ferroxidase activity. Post-translationally, poly-N-acetyllactosaminic carbohydrate moiety seems to be needed for TLR4 activation.

It localises to the secreted. The protein localises to the cytoplasmic granule. Its function is as follows. Transferrins are iron binding transport proteins which can bind two Fe(3+) ions in association with the binding of an anion, usually bicarbonate. Functionally, major iron-binding and multifunctional protein found in exocrine fluids such as breast milk and mucosal secretions. Has antimicrobial activity, which depends on the extracellular cation concentration. Antimicrobial properties include bacteriostasis, which is related to its ability to sequester free iron and thus inhibit microbial growth, as well as direct bactericidal properties leading to the release of lipopolysaccharides from the bacterial outer membrane. Can also prevent bacterial biofilm development in P.aeruginosa infection. Has weak antifungal activity against C.albicans. Has anabolic, differentiating and anti-apoptotic effects on osteoblasts and can also inhibit osteoclastogenesis, possibly playing a role in the regulation of bone growth. Promotes binding of species C adenoviruses to epithelial cells, promoting adenovirus infection. Can inhibit papillomavirus infections. Stimulates the TLR4 signaling pathway leading to NF-kappa-B activation and subsequent pro-inflammatory cytokine production while also interfering with the lipopolysaccharide (LPS)-stimulated TLR4 signaling. Inhibits neutrophil granulocyte migration to sites of apoptosis, when secreted by apoptotic cells. Stimulates VEGFA-mediated endothelial cell migration and proliferation. Binds heparin, chondroitin sulfate and possibly other glycosaminoglycans (GAGs). Also binds specifically to pneumococcal surface protein A (PspA), the lipid A portion of bacterial lipopolysaccharide (LPS), lysozyme and DNA. Lactoferricin binds to the bacterial surface and is crucial for the bactericidal functions. Has some antiviral activity against papillomavirus infection. N-terminal region shows strong antifungal activity against C.albicans. Contains two BBXB heparin-binding consensus sequences that appear to form the predominate functional GAG-binding site. In terms of biological role, the lactotransferrin transferrin-like domain 1 functions as a serine protease of the peptidase S60 family that cuts arginine rich regions. This function contributes to the antimicrobial activity. Shows a preferential cleavage at -Arg-Ser-Arg-Arg-|- and -Arg-Arg-Ser-Arg-|-, and of Z-Phe-Arg-|-aminomethylcoumarin sites. In Equus caballus (Horse), this protein is Lactotransferrin (LTF).